We begin with the raw amino-acid sequence, 74 residues long: Cytochrome c oxidase assembly factor 5 (74 aa).

Residues 27 to 65 form the CHCH domain; it reads QSDCVVQEGKSPRQCLKEGYCNSLKYAFFECKRSVLDNR. Residues 30–41 carry the Cx10C motif motif; that stretch reads CVVQEGKSPRQC. 2 cysteine pairs are disulfide-bonded: C30/C57 and C41/C47. A Phosphoserine modification is found at S37. The short motif at 47-57 is the Cx9C motif element; that stretch reads CNSLKYAFFEC.

This sequence belongs to the PET191 family.

Involved in an early step of the mitochondrial complex IV assembly process. The chain is Cytochrome c oxidase assembly factor 5 (COA5) from Homo sapiens (Human).